The following is a 593-amino-acid chain: Isocitrate dehydrogenase kinase/phosphatase (593 aa).

Residues 324-330 and Lys345 contribute to the ATP site; that span reads APGIRGL. Asp380 is an active-site residue.

Belongs to the AceK family.

It localises to the cytoplasm. The catalysed reaction is L-seryl-[isocitrate dehydrogenase] + ATP = O-phospho-L-seryl-[isocitrate dehydrogenase] + ADP + H(+). Bifunctional enzyme which can phosphorylate or dephosphorylate isocitrate dehydrogenase (IDH) on a specific serine residue. This is a regulatory mechanism which enables bacteria to bypass the Krebs cycle via the glyoxylate shunt in response to the source of carbon. When bacteria are grown on glucose, IDH is fully active and unphosphorylated, but when grown on acetate or ethanol, the activity of IDH declines drastically concomitant with its phosphorylation. The sequence is that of Isocitrate dehydrogenase kinase/phosphatase from Dechloromonas aromatica (strain RCB).